We begin with the raw amino-acid sequence, 184 residues long: Tumor necrosis factor alpha-induced protein 8-like protein 2 (184 aa).

Ser3 is modified (phosphoserine).

It belongs to the TNFAIP8 family. TNFAIP8L2 subfamily. May interact with CASP8; however, such result is unclear since could not reproduce the interaction with CASP8. Interacts with RAC1. Phosphorylated by TAK1/MAP3K7; this phosphorylation triggers association with BTRC and subsequent ubiquitination and degradation. Post-translationally, ubiquitinated in a BTRC-depdent manner; leading to degradation mediated through the proteasome pathway.

The protein resides in the cytoplasm. Its subcellular location is the nucleus. It localises to the lysosome. In terms of biological role, acts as a negative regulator of innate and adaptive immunity by maintaining immune homeostasis. Plays a regulatory role in the Toll-like signaling pathway by determining the strength of LPS-induced signaling and gene expression. Inhibits TCR-mediated T-cell activation and negatively regulate T-cell function to prevent hyperresponsiveness. Also inhibits autolysosome formation via negatively modulating MTOR activation by interacting with RAC1 and promoting the disassociation of the RAC1-MTOR complex. Plays an essential role in NK-cell biology by acting as a checkpoint and displaying an expression pattern correlating with NK-cell maturation process and by negatively regulating NK-cell maturation and antitumor immunity. Mechanistically, suppresses IL-15-triggered mTOR activity in NK-cells. The polypeptide is Tumor necrosis factor alpha-induced protein 8-like protein 2 (TNFAIP8L2) (Otolemur garnettii (Small-eared galago)).